The chain runs to 282 residues: MEMO1 family protein Msed_2139 (282 aa).

This sequence belongs to the MEMO1 family.

The protein is MEMO1 family protein Msed_2139 of Metallosphaera sedula (strain ATCC 51363 / DSM 5348 / JCM 9185 / NBRC 15509 / TH2).